The primary structure comprises 342 residues: Glycerol-3-phosphate dehydrogenase [NAD(P)+] (342 aa).

3 residues coordinate NADPH: Ser-13, Trp-14, and Lys-108. Residues Lys-108, Gly-139, and Ser-141 each coordinate sn-glycerol 3-phosphate. NADPH is bound at residue Ala-143. Residues Lys-194, Asp-247, Ser-257, Arg-258, and Asn-259 each coordinate sn-glycerol 3-phosphate. Lys-194 serves as the catalytic Proton acceptor. Arg-258 contacts NADPH. The NADPH site is built by Val-282 and Glu-284.

The protein belongs to the NAD-dependent glycerol-3-phosphate dehydrogenase family.

The protein localises to the cytoplasm. The catalysed reaction is sn-glycerol 3-phosphate + NAD(+) = dihydroxyacetone phosphate + NADH + H(+). It catalyses the reaction sn-glycerol 3-phosphate + NADP(+) = dihydroxyacetone phosphate + NADPH + H(+). It participates in membrane lipid metabolism; glycerophospholipid metabolism. In terms of biological role, catalyzes the reduction of the glycolytic intermediate dihydroxyacetone phosphate (DHAP) to sn-glycerol 3-phosphate (G3P), the key precursor for phospholipid synthesis. In Lactococcus lactis subsp. cremoris (strain SK11), this protein is Glycerol-3-phosphate dehydrogenase [NAD(P)+].